Here is an 86-residue protein sequence, read N- to C-terminus: Putative membrane protein insertion efficiency factor (86 aa).

The interval 66-86 is disordered; sequence AGGHDPVPPVPPQRYPSAQEH.

This sequence belongs to the UPF0161 family.

The protein resides in the cell inner membrane. In terms of biological role, could be involved in insertion of integral membrane proteins into the membrane. In Nitratidesulfovibrio vulgaris (strain ATCC 29579 / DSM 644 / CCUG 34227 / NCIMB 8303 / VKM B-1760 / Hildenborough) (Desulfovibrio vulgaris), this protein is Putative membrane protein insertion efficiency factor.